The primary structure comprises 588 residues: Lamin-B1 (588 aa).

Residues Met1–Ala12 are compositionally biased toward polar residues. The tract at residues Met1–Lys34 is disordered. Ala2 carries the post-translational modification N-acetylalanine. Residues Ala2–Glu35 are head. Residues Thr3 and Thr5 each carry the phosphothreonine modification. Arg15 carries the post-translational modification Omega-N-methylarginine. Ser17 bears the Phosphoserine mark. Residue Thr21 is modified to Phosphothreonine. A Phosphoserine modification is found at Ser24. Thr26 is modified (phosphothreonine). The residue at position 29 (Ser29) is a Phosphoserine. Positions Glu33–Leu389 constitute an IF rod domain. A coil 1A region spans residues Glu36–Glu70. The tract at residues Val71–Leu82 is linker 1. Residues Tyr83–Glu216 form a coil 1B region. Residue Lys103 forms a Glycyl lysine isopeptide (Lys-Gly) (interchain with G-Cter in SUMO2) linkage. At Lys112 the chain carries N6-acetyllysine. Residue Lys124 forms a Glycyl lysine isopeptide (Lys-Gly) (interchain with G-Cter in SUMO2) linkage. Ser127 carries the post-translational modification Phosphoserine. Lys146 is covalently cross-linked (Glycyl lysine isopeptide (Lys-Gly) (interchain with G-Cter in SUMO2)). At Lys158 the chain carries N6-acetyllysine; alternate. Residue Lys158 forms a Glycyl lysine isopeptide (Lys-Gly) (interchain with G-Cter in SUMO2); alternate linkage. At Ser159 the chain carries Phosphoserine. Lys182 is covalently cross-linked (Glycyl lysine isopeptide (Lys-Gly) (interchain with G-Cter in SUMO2)). 2 positions are modified to phosphoserine: Ser201 and Ser233. The interval Ile217–Ala244 is linker 2. Residues Lys242 and Lys262 each participate in a glycyl lysine isopeptide (Lys-Gly) (interchain with G-Cter in SUMO2) cross-link. The tract at residues Gln245 to Glu387 is coil 2. At Lys272 the chain carries N6-acetyllysine; alternate. A Glycyl lysine isopeptide (Lys-Gly) (interchain with G-Cter in SUMO2); alternate cross-link involves residue Lys272. Phosphoserine is present on residues Ser279 and Ser303. A Glycyl lysine isopeptide (Lys-Gly) (interchain with G-Cter in SUMO2) cross-link involves residue Lys313. Lys331 is modified (N6-acetyllysine; alternate). Lys331 participates in a covalent cross-link: Glycyl lysine isopeptide (Lys-Gly) (interchain with G-Cter in SUMO2); alternate. A phosphoserine mark is found at Ser376 and Ser394. Residues Arg388–Met588 form a tail region. The segment covering Leu391–Val410 has biased composition (low complexity). The disordered stretch occupies residues Leu391–Ile433. The O-linked (GlcNAc) threonine glycan is linked to Thr400. An Omega-N-methylarginine modification is found at Arg414. The short motif at Lys416–Asp421 is the Nuclear localization signal element. An LTD domain is found at Val431–Phe547. Lys484 carries the post-translational modification N6-acetyllysine. Lys533 is covalently cross-linked (Glycyl lysine isopeptide (Lys-Gly) (interchain with G-Cter in SUMO2)). Position 535 is a phosphoserine (Ser535). Lys548 participates in a covalent cross-link: Glycyl lysine isopeptide (Lys-Gly) (interchain with G-Cter in SUMO2). Cys585 carries the post-translational modification Cysteine methyl ester. A lipid anchor (S-farnesyl cysteine) is attached at Cys585. The propeptide at Ala586–Met588 is removed in mature form.

Belongs to the intermediate filament family. Homodimer. Lamin dimers then assemble into dimeric head-to-tail polymers. Ultimately, two head-to-tail polymers assemble laterally into a protofilament with a uniformly shaped rod of 3.5 nm in diameter. Interacts with SPAG4 and SEPT12. In terms of processing, B-type lamins undergo a series of modifications, such as farnesylation and phosphorylation. Increased phosphorylation of the lamins occurs before envelope disintegration and probably plays a role in regulating lamin associations. Post-translationally, phosphorylation plays a key role in lamin organization, subcellular localization and nuclear envelope disintegration. Phosphorylation by CDK1 at Ser-24 and Ser-394 at the onset of mitosis drives lamin disassembly and nuclear envelope breakdown.

Its subcellular location is the nucleus lamina. In terms of biological role, lamins are intermediate filament proteins that assemble into a filamentous meshwork, and which constitute the major components of the nuclear lamina, a fibrous layer on the nucleoplasmic side of the inner nuclear membrane. Lamins provide a framework for the nuclear envelope, bridging the nuclear envelope and chromatin, thereby playing an important role in nuclear assembly, chromatin organization, nuclear membrane and telomere dynamics. The structural integrity of the lamina is strictly controlled by the cell cycle, as seen by the disintegration and formation of the nuclear envelope in prophase and telophase, respectively. This chain is Lamin-B1 (Lmnb1), found in Mus musculus (Mouse).